A 330-amino-acid polypeptide reads, in one-letter code: Olfactory receptor 5P73 (330 aa).

The Extracellular portion of the chain corresponds to 1–28 (MAFLEDGNHTTVTEFFLLGLTDDPVLRD). An N-linked (GlcNAc...) asparagine glycan is attached at asparagine 8. A helical transmembrane segment spans residues 29–49 (ILFIIILCIYLVTVSGNLSTI). Residues 50–57 (LLIRVSSQ) are Cytoplasmic-facing. The chain crosses the membrane as a helical span at residues 58–78 (LHHPMYFILSHLASVDIGISS). At 79-102 (SVTPNMLATFLVKQNTISYIGCSI) the chain is on the extracellular side. Cysteine 100 and cysteine 192 form a disulfide bridge. A helical membrane pass occupies residues 103–123 (QFTSAAFFGTVECFLLATMAY). The Cytoplasmic segment spans residues 124-136 (DRFVAICNPLLYS). The chain crosses the membrane as a helical span at residues 137–157 (TKMSTEACIQLVVGSYIQGFL). The Extracellular portion of the chain corresponds to 158–199 (NASFFTLSFFSLFFCGPNRINDFYCDFAPLLELSCSDVTVAV). A helical membrane pass occupies residues 200–220 (VITSISAGFITLTTVFVIAIS). At 221 to 240 (YSCIFITIMKMHSTESRCKA) the chain is on the cytoplasmic side. Residues 241 to 261 (FSTCTSHLTAVILFYGTAIFI) form a helical membrane-spanning segment. The Extracellular segment spans residues 262 to 274 (YVMPKSSYSTDQN). Residues 275–295 (KVLSIFYTVVIPMLNPLIYSL) form a helical membrane-spanning segment. Residues 296–330 (RNNEIKEALKRHLGKKVFSYGNLFCKTHYNHNYPV) are Cytoplasmic-facing.

This sequence belongs to the G-protein coupled receptor 1 family.

It is found in the cell membrane. In terms of biological role, potential odorant receptor. The protein is Olfactory receptor 5P73 of Mus musculus (Mouse).